Consider the following 232-residue polypeptide: Orotidine 5'-phosphate decarboxylase (232 aa).

Substrate-binding positions include Asp13, Lys35, 62–71 (DLKFHDIPNT), Thr122, Arg182, Gln191, Gly211, and Arg212. Lys64 acts as the Proton donor in catalysis.

The protein belongs to the OMP decarboxylase family. Type 1 subfamily. As to quaternary structure, homodimer.

The catalysed reaction is orotidine 5'-phosphate + H(+) = UMP + CO2. Its pathway is pyrimidine metabolism; UMP biosynthesis via de novo pathway; UMP from orotate: step 2/2. In terms of biological role, catalyzes the decarboxylation of orotidine 5'-monophosphate (OMP) to uridine 5'-monophosphate (UMP). The chain is Orotidine 5'-phosphate decarboxylase from Pseudomonas fluorescens (strain SBW25).